A 171-amino-acid chain; its full sequence is Ribosome maturation factor RimM (171 aa).

The 73-residue stretch at 97 to 169 folds into the PRC barrel domain; it reads DGEFYYHEII…RVDVDIMEGL (73 aa).

It belongs to the RimM family. As to quaternary structure, binds ribosomal protein uS19.

The protein resides in the cytoplasm. In terms of biological role, an accessory protein needed during the final step in the assembly of 30S ribosomal subunit, possibly for assembly of the head region. Essential for efficient processing of 16S rRNA. May be needed both before and after RbfA during the maturation of 16S rRNA. It has affinity for free ribosomal 30S subunits but not for 70S ribosomes. The chain is Ribosome maturation factor RimM from Lactococcus lactis subsp. cremoris (strain MG1363).